The primary structure comprises 413 residues: MGLYSPESEKSQLNMNYIGKDDSQSIFRRLNQNLKASNNNNDSNKNGLNMSDYSNNSPYGRSYDVRINQNSQNNGNGCFSGSIDSLVDEHIIPSPPLSPKLESKISHNGSPRMASSVLVGSTPKGAVENVLFVKPVWPNGLSRKRYRYATYGFLSQYKIFSNLAQPYSKNIINRYNNLAYNARHKYSKYNDDMTPPPLPSSSSRLPSPLASPNLNRQARYNMRKQALYNNNLGKFESDTEWIPRKRKVYSPQRRTMTTSPHRAKKFSPSASTPHTNIASIEAIHDAPQYIPNVSWKKLPDYSPPLSTLPTDSNKSLKIEWKGSPMDLSTDPLRNELHPAELVLAQTLRLPCDLYLDSKRRLFLEKVYRLKKGLPFRRTDAQKACRIDVNKASRLFQAFEKVGWLQDSNFTKYL.

Over residues 35-51 (KASNNNNDSNKNGLNMS) the composition is skewed to low complexity. Disordered stretches follow at residues 35–55 (KASN…DYSN), 189–211 (YNDD…PLAS), and 249–271 (YSPQ…PSAS). Residue threonine 194 is modified to Phosphothreonine. The span at 200–211 (SSSSRLPSPLAS) shows a compositional bias: low complexity. Phosphoserine is present on residues serine 207 and serine 211. The 98-residue stretch at 316–413 (LKIEWKGSPM…LQDSNFTKYL (98 aa)) folds into the SWIRM domain.

This Saccharomyces cerevisiae (strain ATCC 204508 / S288c) (Baker's yeast) protein is SWIRM domain-containing protein FUN19 (FUN19).